We begin with the raw amino-acid sequence, 221 residues long: tRNA (guanine-N(7)-)-methyltransferase (221 aa).

S-adenosyl-L-methionine contacts are provided by Glu-43, Glu-68, and Asp-123. The active site involves Asp-123. Residues Lys-127, Asp-159, and Thr-199–Glu-202 each bind substrate.

Belongs to the class I-like SAM-binding methyltransferase superfamily. TrmB family.

The catalysed reaction is guanosine(46) in tRNA + S-adenosyl-L-methionine = N(7)-methylguanosine(46) in tRNA + S-adenosyl-L-homocysteine. Its pathway is tRNA modification; N(7)-methylguanine-tRNA biosynthesis. Functionally, catalyzes the formation of N(7)-methylguanine at position 46 (m7G46) in tRNA. The polypeptide is tRNA (guanine-N(7)-)-methyltransferase (Mycoplasma mycoides subsp. mycoides SC (strain CCUG 32753 / NCTC 10114 / PG1)).